The following is a 771-amino-acid chain: DNA helicase/primase complex-associated protein (771 aa).

This sequence belongs to the herpesviridae HEPA family. Associates with the primase and the helicase to form the helicase-primase complex. Interacts with the origin-binding protein. Interacts with the polymerase catalytic subunit.

Its subcellular location is the host nucleus. In terms of biological role, component of the helicase/primase complex. Unwinds the DNA at the replication forks and generates single-stranded DNA for both leading and lagging strand synthesis. The primase synthesizes short RNA primers on the lagging strand that the polymerase presumably elongates using dNTPs. The primase-associated factor has no known catalytic activity in the complex and may serve to facilitate the formation of the replisome by directly interacting with the origin-binding protein and the polymerase. This Varicella-zoster virus (strain Oka vaccine) (HHV-3) protein is DNA helicase/primase complex-associated protein.